Consider the following 202-residue polypeptide: Ras-related protein Rab-2B (202 aa).

Position 31-38 (31-38 (GDSAVGKS)) interacts with GTP. The Effector region signature appears at 53–61 (SDFTIGVEF). Residues 79-83 (DTAGQ) and 137-140 (NKAD) each bind GTP.

It belongs to the small GTPase superfamily. Rab family. In terms of processing, this sequence lacks the C-terminal cysteine motifs subject to isoprenylation in other Rab proteins.

This chain is Ras-related protein Rab-2B (rab2B), found in Dictyostelium discoideum (Social amoeba).